The primary structure comprises 260 residues: Pyridoxine 5'-phosphate synthase (260 aa).

2 residues coordinate 3-amino-2-oxopropyl phosphate: Asn-10 and Arg-21. His-46 serves as the catalytic Proton acceptor. 1-deoxy-D-xylulose 5-phosphate-binding residues include Arg-48 and His-53. The active-site Proton acceptor is the Glu-76. Thr-113 contributes to the 1-deoxy-D-xylulose 5-phosphate binding site. The active-site Proton donor is the His-204. 3-amino-2-oxopropyl phosphate contacts are provided by residues Asp-205 and 227 to 228 (GH).

Belongs to the PNP synthase family. As to quaternary structure, homooctamer; tetramer of dimers.

The protein resides in the cytoplasm. It catalyses the reaction 3-amino-2-oxopropyl phosphate + 1-deoxy-D-xylulose 5-phosphate = pyridoxine 5'-phosphate + phosphate + 2 H2O + H(+). The protein operates within cofactor biosynthesis; pyridoxine 5'-phosphate biosynthesis; pyridoxine 5'-phosphate from D-erythrose 4-phosphate: step 5/5. Catalyzes the complicated ring closure reaction between the two acyclic compounds 1-deoxy-D-xylulose-5-phosphate (DXP) and 3-amino-2-oxopropyl phosphate (1-amino-acetone-3-phosphate or AAP) to form pyridoxine 5'-phosphate (PNP) and inorganic phosphate. This chain is Pyridoxine 5'-phosphate synthase, found in Xylella fastidiosa (strain M23).